Reading from the N-terminus, the 84-residue chain is LLIITACLALIGTVWAKEGYLVDKNTGCKYECLKLGDNDYCLRECKQQYGKGAGGYCYAFACWCTHLYEQAIVWPLPNKRCSGK.

Residues 1-16 form the signal peptide; the sequence is LLIITACLALIGTVWA. Positions 17-82 constitute an LCN-type CS-alpha/beta domain; sequence KEGYLVDKNT…VWPLPNKRCS (66 aa). 4 disulfide bridges follow: Cys-28/Cys-81, Cys-32/Cys-57, Cys-41/Cys-62, and Cys-45/Cys-64. The residue at position 82 (Ser-82) is a Serine amide.

This sequence belongs to the long (4 C-C) scorpion toxin superfamily. Sodium channel inhibitor family. Beta subfamily. In terms of tissue distribution, expressed by the venom gland.

It is found in the secreted. Its function is as follows. Mammal beta-toxins bind voltage-independently at site-4 of sodium channels (Nav) and shift the activation voltage to more negative potentials. This toxin is active against mammals. In Centruroides noxius (Mexican scorpion), this protein is Beta-mammal toxin Cn2.